Consider the following 264-residue polypeptide: Thymidylate synthase (264 aa).

Arginine 21 is a binding site for dUMP. Residue histidine 51 participates in (6R)-5,10-methylene-5,6,7,8-tetrahydrofolate binding. Position 126–127 (126–127 (RR)) interacts with dUMP. Cysteine 146 (nucleophile) is an active-site residue. Residues 166–169 (RSAD), asparagine 177, and 207–209 (HLY) contribute to the dUMP site. Aspartate 169 is a (6R)-5,10-methylene-5,6,7,8-tetrahydrofolate binding site. Alanine 263 is a binding site for (6R)-5,10-methylene-5,6,7,8-tetrahydrofolate.

The protein belongs to the thymidylate synthase family. Bacterial-type ThyA subfamily. Homodimer.

The protein resides in the cytoplasm. It carries out the reaction dUMP + (6R)-5,10-methylene-5,6,7,8-tetrahydrofolate = 7,8-dihydrofolate + dTMP. It functions in the pathway pyrimidine metabolism; dTTP biosynthesis. Catalyzes the reductive methylation of 2'-deoxyuridine-5'-monophosphate (dUMP) to 2'-deoxythymidine-5'-monophosphate (dTMP) while utilizing 5,10-methylenetetrahydrofolate (mTHF) as the methyl donor and reductant in the reaction, yielding dihydrofolate (DHF) as a by-product. This enzymatic reaction provides an intracellular de novo source of dTMP, an essential precursor for DNA biosynthesis. The polypeptide is Thymidylate synthase (Ralstonia nicotianae (strain ATCC BAA-1114 / GMI1000) (Ralstonia solanacearum)).